The following is a 463-amino-acid chain: L-seryl-tRNA(Sec) selenium transferase (463 aa).

N6-(pyridoxal phosphate)lysine is present on Lys295.

Belongs to the SelA family. Homodecamer; pentamer of dimers. Binds only one seryl-tRNA(Sec) per dimer. Requires pyridoxal 5'-phosphate as cofactor.

The protein resides in the cytoplasm. It catalyses the reaction L-seryl-tRNA(Sec) + selenophosphate + H(+) = L-selenocysteinyl-tRNA(Sec) + phosphate. The protein operates within aminoacyl-tRNA biosynthesis; selenocysteinyl-tRNA(Sec) biosynthesis; selenocysteinyl-tRNA(Sec) from L-seryl-tRNA(Sec) (bacterial route): step 1/1. Converts seryl-tRNA(Sec) to selenocysteinyl-tRNA(Sec) required for selenoprotein biosynthesis. This chain is L-seryl-tRNA(Sec) selenium transferase, found in Photorhabdus laumondii subsp. laumondii (strain DSM 15139 / CIP 105565 / TT01) (Photorhabdus luminescens subsp. laumondii).